The chain runs to 343 residues: N-acetyl-gamma-glutamyl-phosphate reductase (343 aa).

Cysteine 146 is an active-site residue.

It belongs to the NAGSA dehydrogenase family. Type 1 subfamily.

It is found in the cytoplasm. It catalyses the reaction N-acetyl-L-glutamate 5-semialdehyde + phosphate + NADP(+) = N-acetyl-L-glutamyl 5-phosphate + NADPH + H(+). Its pathway is amino-acid biosynthesis; L-arginine biosynthesis; N(2)-acetyl-L-ornithine from L-glutamate: step 3/4. Catalyzes the NADPH-dependent reduction of N-acetyl-5-glutamyl phosphate to yield N-acetyl-L-glutamate 5-semialdehyde. This is N-acetyl-gamma-glutamyl-phosphate reductase from Acidothermus cellulolyticus (strain ATCC 43068 / DSM 8971 / 11B).